We begin with the raw amino-acid sequence, 316 residues long: Iron-sulfur cluster assembly SufBD family protein MJ0034 (316 aa).

It belongs to the iron-sulfur cluster assembly SufBD family.

In Methanocaldococcus jannaschii (strain ATCC 43067 / DSM 2661 / JAL-1 / JCM 10045 / NBRC 100440) (Methanococcus jannaschii), this protein is Iron-sulfur cluster assembly SufBD family protein MJ0034.